A 660-amino-acid chain; its full sequence is tRNA 5-methylaminomethyl-2-thiouridine biosynthesis bifunctional protein MnmC (660 aa).

The tract at residues 1-242 is tRNA (mnm(5)s(2)U34)-methyltransferase; that stretch reads MTDRIVPATL…KRAMLVGEFA (242 aa). The FAD-dependent cmnm(5)s(2)U34 oxidoreductase stretch occupies residues 266 to 660; it reads IGAGLAGCAV…VRALRHGRVA (395 aa).

It in the N-terminal section; belongs to the methyltransferase superfamily. tRNA (mnm(5)s(2)U34)-methyltransferase family. In the C-terminal section; belongs to the DAO family. FAD is required as a cofactor.

It localises to the cytoplasm. It carries out the reaction 5-aminomethyl-2-thiouridine(34) in tRNA + S-adenosyl-L-methionine = 5-methylaminomethyl-2-thiouridine(34) in tRNA + S-adenosyl-L-homocysteine + H(+). Catalyzes the last two steps in the biosynthesis of 5-methylaminomethyl-2-thiouridine (mnm(5)s(2)U) at the wobble position (U34) in tRNA. Catalyzes the FAD-dependent demodification of cmnm(5)s(2)U34 to nm(5)s(2)U34, followed by the transfer of a methyl group from S-adenosyl-L-methionine to nm(5)s(2)U34, to form mnm(5)s(2)U34. The polypeptide is tRNA 5-methylaminomethyl-2-thiouridine biosynthesis bifunctional protein MnmC (Burkholderia mallei (strain NCTC 10247)).